The sequence spans 373 residues: UBX domain-containing protein 1 (373 aa).

Disordered regions lie at residues 39–179 and 236–293; these read VTEF…QIPR and IKQH…VDES. The span at 49–59 shows a compositional bias: polar residues; that stretch reads TAGSSEPTGQP. Low complexity-rich tracts occupy residues 60–71 and 85–94; these read SAKSSSSTPRES and LGDLASGAAD. Positions 95-104 are enriched in acidic residues; that stretch reads SSDDDDDENQ. Residues 121–132 are compositionally biased toward basic and acidic residues; sequence DDLKKKIIEKAR. Residues 185 to 258 enclose the SEP domain; sequence LHFWADGFSV…KYQPFAGKGQ (74 aa). Positions 292–369 constitute a UBX domain; the sequence is ESQPVVTLQI…PEFKRGGVVV (78 aa).

In terms of biological role, involved in CDC48-dependent protein degradation through the ubiquitin/proteasome pathway. This Emericella nidulans (strain FGSC A4 / ATCC 38163 / CBS 112.46 / NRRL 194 / M139) (Aspergillus nidulans) protein is UBX domain-containing protein 1 (ubx1).